The following is a 3430-amino-acid chain: Genome polyprotein (3430 aa).

The interval 2-15 (SKKPGGPGKNRAVN) is interaction with host EXOC1. Topologically, residues 2 to 105 (SKKPGGPGKN…NRRSTKQKKR (104 aa)) are cytoplasmic. The segment at 37–72 (LIDGKGPIRFVLALLAFFRFTAIAPTRAVLDRWRGV) is hydrophobic; homodimerization of capsid protein C. Residues 106–123 (GGTAGFTILLGLIACAGA) constitute a propeptide, ER anchor for the capsid protein C, removed in mature form by serine protease NS3. A helical membrane pass occupies residues 106-126 (GGTAGFTILLGLIACAGAVTL). Residues 127-248 (SNFQGKVMMT…KATRYLVKTE (122 aa)) lie on the Extracellular side of the membrane. N-linked (GlcNAc...) asparagine; by host glycosylation is present at Asn138. A helical transmembrane segment spans residues 249–269 (SWILRNPGYALVAAVIGWMLG). The Cytoplasmic segment spans residues 270-275 (SNTMQR). The helical transmembrane segment at 276-290 (VVFAILLLLVAPAYS) threads the bilayer. Topologically, residues 291 to 739 (FNCLGMSNRD…QVFGGAFRSL (449 aa)) are extracellular. 6 disulfide bridges follow: Cys293–Cys320, Cys350–Cys406, Cys364–Cys395, Cys382–Cys411, Cys476–Cys574, and Cys591–Cys622. Residues 388–401 (DRGWGNGCGLFGKG) form a fusion peptide region. The helical transmembrane segment at 740-760 (FGGMSWITQGLLGALLLWMGI) threads the bilayer. Topologically, residues 761–766 (NARDRS) are cytoplasmic. The chain crosses the membrane as a helical span at residues 767 to 787 (IAMTFLAVGGVLLFLSVNVHA). The Extracellular portion of the chain corresponds to 788–1212 (DTGCAIDIGR…AFAEANSGGD (425 aa)). Intrachain disulfides connect Cys791–Cys802 and Cys842–Cys930. 3 N-linked (GlcNAc...) asparagine; by host glycosylation sites follow: Asn917, Asn962, and Asn994. 4 disulfide bridges follow: Cys966-Cys1010, Cys1067-Cys1116, Cys1078-Cys1099, and Cys1100-Cys1103. Residues 1213 to 1233 (VVHLALMATFKIQPVFLVASF) form a helical membrane-spanning segment. The Cytoplasmic portion of the chain corresponds to 1234 to 1243 (LKARWTNQES). A helical membrane pass occupies residues 1244–1264 (ILLMLAAAFFQMAYYDAKNVL). Residues 1265–1278 (SWEVPDVLNSLSVA) are Lumenal-facing. A helical transmembrane segment spans residues 1279–1299 (WMILRAISFTNTSNVVVPLLA). Residues 1300-1307 (LLTPGLKC) are Cytoplasmic-facing. A helical membrane pass occupies residues 1308 to 1328 (LNLDVYRILLLMVGVGSLIKE). Over 1329-1340 (KRSSAAKKKGAC) the chain is Lumenal. A helical transmembrane segment spans residues 1341–1361 (LICLALASTGVFNPMILAAGL). Over 1362–1371 (MACDPNRKRG) the chain is Cytoplasmic. Residues 1372–1392 (WPATEVMTAVGLMFAIVGGLA) form a helical membrane-spanning segment. At 1393–1395 (ELD) the chain is on the lumenal side. A helical membrane pass occupies residues 1396 to 1416 (IDSMAIPMTIAGLMFAAFVIS). Residues 1417–1473 (GKSTDMWIERTADITWESDAEITGSSERVDVRLDDDGNFQLMNDPGAPWKIWMLRMA) lie on the Cytoplasmic side of the membrane. The interval 1424-1463 (IERTADITWESDAEITGSSERVDVRLDDDGNFQLMNDPGA) is interacts with and activates NS3 protease. The helical intramembrane region spans 1474-1494 (CLAISAYTPWAILPSVIGFWI). Topologically, residues 1495 to 2170 (TLQYTKRGGV…RMALEELPDA (676 aa)) are cytoplasmic. One can recognise a Peptidase S7 domain in the interval 1502–1679 (GGVLWDTPSP…ERMEEPAPAG (178 aa)). Catalysis depends on charge relay system; for serine protease NS3 activity residues His1552, Asp1576, and Ser1636. A Helicase ATP-binding domain is found at 1682–1838 (PEMLRKKQIT…ESNAPISDMQ (157 aa)). Positions 1686-1689 (RKKQ) are important for RNA-binding. 1695 to 1702 (LHPGAGKT) provides a ligand contact to ATP. A DEAH box motif is present at residues 1786 to 1789 (DEAH). The 166-residue stretch at 1849–2014 (GYEWITEYVG…GLVAQLYQPE (166 aa)) folds into the Helicase C-terminal domain. The residue at position 1890 (Lys1890) is an N6-acetyllysine; by host. The interval 2165–2169 (EELPD) is regulates the ATPase activity of NS3 helicase. Residues 2171 to 2191 (LQTIVLIALLSVMSLGVFFLL) traverse the membrane as a helical segment. The Lumenal portion of the chain corresponds to 2192 to 2196 (MQRKG). The segment at residues 2197–2217 (IGKIGLGGVILGAATFFCWMA) is an intramembrane region (helical). Position 2218 (Glu2218) is a topological domain, lumenal. The helical transmembrane segment at 2219-2239 (VPGTKIAGMLLLSLLLMIVLI) threads the bilayer. Residues 2240–2254 (PEPEKQRSQTDNQLA) are Cytoplasmic-facing. The chain crosses the membrane as a helical span at residues 2255–2275 (VFLICVLTLVGAVAANEMGWL). Residues 2276-2309 (DKTKNDIGSLLGHRPEARETTLGVESFLLDLRPA) are Lumenal-facing. An intramembrane region (helical) is located at residues 2310–2330 (TAWSLYAVTTAVLTPLLKHLI). Residues 2331–2377 (TSDYINTSLTSINVQASALFTLARGFPFVDVGVSALLLAVGCWGQVT) are Lumenal-facing. A helical membrane pass occupies residues 2378 to 2398 (LTVTVTAAALLFCHYAYMVPG). The Cytoplasmic portion of the chain corresponds to 2399–2441 (WQAEAMRSAQRRTAAGIMKNVVVDGIVATDVPELERTTPVMQK). Residues 2442-2462 (KVGQIILILVSMAAVVVNPSV) form a helical membrane-spanning segment. Residues 2463–2467 (RTVRE) are Lumenal-facing. The chain crosses the membrane as a helical span at residues 2468 to 2488 (AGILTTAAAVTLWENGASSVW). Residues 2489–3430 (NATTAIGLCH…DTIVVEDTVL (942 aa)) are Cytoplasmic-facing. Residues 2526-2791 (GGAKGRTLGE…DVNLGSGTRA (266 aa)) form the mRNA cap 0-1 NS5-type MT domain. Ser2581 provides a ligand contact to S-adenosyl-L-methionine. Ser2581 bears the Phosphoserine mark. Lys2586 acts as the For 2'-O-MTase activity in catalysis. S-adenosyl-L-methionine contacts are provided by Gly2611, Trp2612, Thr2629, Lys2630, Asp2656, and Val2657. The For 2'-O-MTase activity role is filled by Asp2671. Ile2672 is an S-adenosyl-L-methionine binding site. Residues Lys2707 and Glu2743 each act as for 2'-O-MTase activity in the active site. S-adenosyl-L-methionine is bound at residue Tyr2745. A Nuclear localization signal motif is present at residues 2914-2916 (RDK). The Zn(2+) site is built by Glu2965, His2969, Cys2974, and Cys2977. Residues 3055 to 3207 (GKVYADDTAG…KPLDDRFATS (153 aa)) enclose the RdRp catalytic domain. Zn(2+)-binding residues include His3242, Cys3258, and Cys3377. The PDZ-binding motif lies at 3428 to 3430 (TVL).

This sequence in the N-terminal section; belongs to the class I-like SAM-binding methyltransferase superfamily. mRNA cap 0-1 NS5-type methyltransferase family. In terms of assembly, homodimer. Interacts (via N-terminus) with host EXOC1 (via C-terminus); this interaction results in EXOC1 degradation through the proteasome degradation pathway. Interacts with host DDX56; this interaction plays an important role in genomic RNA encapsidation. As to quaternary structure, forms heterodimers with envelope protein E in the endoplasmic reticulum and Golgi. Homodimer; in the endoplasmic reticulum and Golgi. In terms of assembly, homodimer; Homohexamer when secreted. Interacts with envelope protein E. NS1 interacts with NS4B. Interacts with host complement protein CFH; this interaction leads to the degradation of C3. As to quaternary structure, interacts (via N-terminus) with serine protease NS3. Forms a heterodimer with serine protease NS3. May form homooligomers. In terms of assembly, forms a heterodimer with NS2B. Interacts with NS4B. Interacts with unphosphorylated RNA-directed RNA polymerase NS5; this interaction stimulates RNA-directed RNA polymerase NS5 guanylyltransferase activity. As to quaternary structure, interacts with Serine protease/Helicase NS3. Interacts with NS1. Homodimer. Interacts with host STAT2; this interaction inhibits the phosphorylation of the latter, and, when all viral proteins are present (polyprotein), targets STAT2 for degradation. Interacts with host PAF1 complex. Post-translationally, specific enzymatic cleavages in vivo yield mature proteins. Cleavages in the lumen of endoplasmic reticulum are performed by host signal peptidase, whereas cleavages in the cytoplasmic side are performed by serine protease NS3. Signal cleavage at the 2K-4B site requires a prior NS3 protease-mediated cleavage at the 4A-2K site. In terms of processing, cleaved in post-Golgi vesicles by a host furin, releasing the mature small envelope protein M, and peptide pr. This cleavage is incomplete as up to 30% of viral particles still carry uncleaved prM. Not N-glycosylated. Post-translationally, N-glycosylated. The excreted form is glycosylated and this is required for efficient secretion of the protein from infected cells. In terms of processing, acetylated by host KAT5. Acetylation modulates NS3 RNA-binding and unwinding activities and plays an important positive role for viral replication. Phosphorylated on serines residues. This phosphorylation may trigger NS5 nuclear localization.

It is found in the virion. The protein resides in the host nucleus. The protein localises to the host cytoplasm. It localises to the host perinuclear region. Its subcellular location is the secreted. It is found in the virion membrane. The protein resides in the host endoplasmic reticulum membrane. The catalysed reaction is Selective hydrolysis of -Xaa-Xaa-|-Yaa- bonds in which each of the Xaa can be either Arg or Lys and Yaa can be either Ser or Ala.. It carries out the reaction RNA(n) + a ribonucleoside 5'-triphosphate = RNA(n+1) + diphosphate. It catalyses the reaction a ribonucleoside 5'-triphosphate + H2O = a ribonucleoside 5'-diphosphate + phosphate + H(+). The enzyme catalyses ATP + H2O = ADP + phosphate + H(+). The catalysed reaction is a 5'-end (5'-triphosphoguanosine)-ribonucleoside in mRNA + S-adenosyl-L-methionine = a 5'-end (N(7)-methyl 5'-triphosphoguanosine)-ribonucleoside in mRNA + S-adenosyl-L-homocysteine. It carries out the reaction a 5'-end (N(7)-methyl 5'-triphosphoguanosine)-ribonucleoside in mRNA + S-adenosyl-L-methionine = a 5'-end (N(7)-methyl 5'-triphosphoguanosine)-(2'-O-methyl-ribonucleoside) in mRNA + S-adenosyl-L-homocysteine + H(+). Its function is as follows. Plays a role in virus budding by binding to the cell membrane and gathering the viral RNA into a nucleocapsid that forms the core of a mature virus particle. During virus entry, may induce genome penetration into the host cytoplasm after hemifusion induced by the surface proteins. Can migrate to the cell nucleus where it modulates host functions. Overcomes the anti-viral effects of host EXOC1 by sequestering and degrading the latter through the proteasome degradation pathway. Functionally, inhibits RNA silencing by interfering with host Dicer. Prevents premature fusion activity of envelope proteins in trans-Golgi by binding to envelope protein E at pH6.0. After virion release in extracellular space, gets dissociated from E dimers. In terms of biological role, acts as a chaperone for envelope protein E during intracellular virion assembly by masking and inactivating envelope protein E fusion peptide. prM is the only viral peptide matured by host furin in the trans-Golgi network probably to avoid catastrophic activation of the viral fusion activity in acidic Golgi compartment prior to virion release. prM-E cleavage is inefficient, and many virions are only partially matured. These uncleaved prM would play a role in immune evasion. Its function is as follows. May play a role in virus budding. Exerts cytotoxic effects by activating a mitochondrial apoptotic pathway through M ectodomain. May display a viroporin activity. Functionally, binds to host cell surface receptor and mediates fusion between viral and cellular membranes. Envelope protein is synthesized in the endoplasmic reticulum in the form of heterodimer with protein prM. They play a role in virion budding in the ER, and the newly formed immature particle is covered with 60 spikes composed of heterodimer between precursor prM and envelope protein E. The virion is transported to the Golgi apparatus where the low pH causes dissociation of PrM-E heterodimers and formation of E homodimers. prM-E cleavage is inefficient, and many virions are only partially matured. These uncleaved prM would play a role in immune evasion. Involved in immune evasion, pathogenesis and viral replication. Once cleaved off the polyprotein, is targeted to three destinations: the viral replication cycle, the plasma membrane and the extracellular compartment. Essential for viral replication. Required for formation of the replication complex and recruitment of other non-structural proteins to the ER-derived membrane structures. Excreted as a hexameric lipoparticle that plays a role against host immune response. Antagonizing the complement function. Binds to the host macrophages and dendritic cells. Inhibits signal transduction originating from Toll-like receptor 3 (TLR3). In terms of biological role, component of the viral RNA replication complex that functions in virion assembly and antagonizes the host alpha/beta interferon antiviral response. Its function is as follows. Required cofactor for the serine protease function of NS3. May have membrane-destabilizing activity and form viroporins. Functionally, displays three enzymatic activities: serine protease, NTPase and RNA helicase. NS3 serine protease, in association with NS2B, performs its autocleavage and cleaves the polyprotein at dibasic sites in the cytoplasm: C-prM, NS2A-NS2B, NS2B-NS3, NS3-NS4A, NS4A-2K and NS4B-NS5. NS3 RNA helicase binds RNA and unwinds dsRNA in the 3' to 5' direction. NS3 supports the separation of RNA daughter and template strands during viral replication. The helicase part is involved in the inhibition of phosphorylation of host STAT1, and thereby inhibition of host type-I IFN signaling. In addition, NS3 assists the initiation of replication by unwinding the RNA secondary structure in the 3' non-translated region (NTR). Inhibits STAT2 translocation in the nucleus after IFN-alpha treatment. Regulates the ATPase activity of the NS3 helicase activity. NS4A allows NS3 helicase to conserve energy during unwinding. In terms of biological role, functions as a signal peptide for NS4B and is required for the interferon antagonism activity of the latter. Its function is as follows. Induces the formation of ER-derived membrane vesicles where the viral replication takes place. Inhibits interferon (IFN)-induced host STAT1 phosphorylation and nuclear translocation, thereby preventing the establishment of cellular antiviral state by blocking the IFN-alpha/beta pathway. Inhibits STAT2 translocation in the nucleus after IFN-alpha treatment. Functionally, replicates the viral (+) and (-) RNA genome, and performs the capping of genomes in the cytoplasm. NS5 methylates viral RNA cap at guanine N-7 and ribose 2'-O positions. Besides its role in RNA genome replication, also prevents the establishment of cellular antiviral state by blocking the interferon-alpha/beta (IFN-alpha/beta) signaling pathway. Inhibits host TYK2 and STAT2 phosphorylation, thereby preventing activation of JAK-STAT signaling pathway. The chain is Genome polyprotein from Aedes (Tropical bont tick).